A 123-amino-acid polypeptide reads, in one-letter code: Large ribosomal subunit protein uL14c (123 aa).

It belongs to the universal ribosomal protein uL14 family. Part of the 50S ribosomal subunit.

It localises to the plastid. The protein localises to the chloroplast. Its function is as follows. Binds to 23S rRNA. The protein is Large ribosomal subunit protein uL14c of Saccharum hybrid (Sugarcane).